Reading from the N-terminus, the 1037-residue chain is Ras guanine nucleotide exchange factor E (1037 aa).

Positions 5–35 form a coiled coil; that stretch reads ECNNRIEYLQNKVLELESLNENLKGQLEYFQ. Disordered stretches follow at residues 65–100, 114–150, 166–387, 414–437, 451–472, 602–628, 907–935, and 1004–1037; these read NNNN…TTNN, TNSN…ELSN, TTTT…PLSN, TVNM…LYHS, SSLS…LTNP, INSN…NQLE, NTTT…QQLN, and EKET…SFKS. Low complexity-rich tracts occupy residues 114 to 145 and 166 to 200; these read TNSN…NNSN and TTTT…NNNN. Residues 229-239 are compositionally biased toward polar residues; sequence PTSSRNSPTNK. Over residues 240–276 the composition is skewed to low complexity; the sequence is SSPQFLSPLSKSPLSQSTQSTTVSSPSPSWTTTVPQS. Polar residues predominate over residues 282–300; sequence TIVQSKSPYSPDTNISNKL. The segment covering 318–360 has biased composition (low complexity); that stretch reads SPSKNSPRSLNSNNNNSSATTSITTPPTTSTPTPTTSTTTTTT. The segment covering 361–370 has biased composition (basic and acidic residues); that stretch reads TERRPEDRRS. Polar residues-rich tracts occupy residues 372–387 and 424–437; these read TSPF…PLSN and PRSN…LYHS. The region spanning 496-694 is the N-terminal Ras-GEF domain; that stretch reads NGFIVKGGTI…NLKRLLTNDR (199 aa). A Ras-GEF domain is found at 726–1003; the sequence is DPTEIARQLT…YKLSLICEPK (278 aa). Residues 907-930 show a composition bias toward low complexity; that stretch reads NTTTTTTTTTTTTTTNTTTSNNNN. Residues 1027–1037 are compositionally biased toward polar residues; it reads SVTSLLNSFKS.

Its function is as follows. Promotes the exchange of Ras-bound GDP by GTP. Seems to play a role in chemotaxis. The sequence is that of Ras guanine nucleotide exchange factor E (gefE) from Dictyostelium discoideum (Social amoeba).